Here is a 272-residue protein sequence, read N- to C-terminus: Imidazole glycerol phosphate synthase subunit HisF (272 aa).

Active-site residues include D11 and D130.

This sequence belongs to the HisA/HisF family. As to quaternary structure, heterodimer of HisH and HisF.

It localises to the cytoplasm. It carries out the reaction 5-[(5-phospho-1-deoxy-D-ribulos-1-ylimino)methylamino]-1-(5-phospho-beta-D-ribosyl)imidazole-4-carboxamide + L-glutamine = D-erythro-1-(imidazol-4-yl)glycerol 3-phosphate + 5-amino-1-(5-phospho-beta-D-ribosyl)imidazole-4-carboxamide + L-glutamate + H(+). Its pathway is amino-acid biosynthesis; L-histidine biosynthesis; L-histidine from 5-phospho-alpha-D-ribose 1-diphosphate: step 5/9. IGPS catalyzes the conversion of PRFAR and glutamine to IGP, AICAR and glutamate. The HisF subunit catalyzes the cyclization activity that produces IGP and AICAR from PRFAR using the ammonia provided by the HisH subunit. The sequence is that of Imidazole glycerol phosphate synthase subunit HisF from Methanococcus maripaludis (strain C5 / ATCC BAA-1333).